The sequence spans 570 residues: Urease subunit alpha (570 aa).

Residues 131-570 (GGIDSHIHFI…LPMTQRYFLF (440 aa)) enclose the Urease domain. His136, His138, and Lys219 together coordinate Ni(2+). Position 219 is an N6-carboxylysine (Lys219). Residue His221 coordinates substrate. Positions 248 and 274 each coordinate Ni(2+). The active-site Proton donor is His322. Ni(2+) is bound at residue Asp362.

The protein belongs to the metallo-dependent hydrolases superfamily. Urease alpha subunit family. As to quaternary structure, heterotrimer of UreA (gamma), UreB (beta) and UreC (alpha) subunits. Three heterotrimers associate to form the active enzyme. The cofactor is Ni cation. Post-translationally, carboxylation allows a single lysine to coordinate two nickel ions.

The protein resides in the cytoplasm. The enzyme catalyses urea + 2 H2O + H(+) = hydrogencarbonate + 2 NH4(+). It participates in nitrogen metabolism; urea degradation; CO(2) and NH(3) from urea (urease route): step 1/1. This Trichodesmium erythraeum (strain IMS101) protein is Urease subunit alpha.